The chain runs to 56 residues: Large ribosomal subunit protein bL32c (56 aa).

Positions 1-20 are enriched in basic residues; that stretch reads MAAPKKRTSKSRKNMRKSTW. The disordered stretch occupies residues 1–28; it reads MAAPKKRTSKSRKNMRKSTWKRQAATQA.

Belongs to the bacterial ribosomal protein bL32 family.

It is found in the plastid. The protein resides in the chloroplast. The sequence is that of Large ribosomal subunit protein bL32c (rpl32) from Mesostigma viride (Green alga).